Here is a 117-residue protein sequence, read N- to C-terminus: Photosystem II reaction center Psb28 protein (117 aa).

It belongs to the Psb28 family. As to quaternary structure, part of the photosystem II complex.

It is found in the cellular thylakoid membrane. The chain is Photosystem II reaction center Psb28 protein from Prochlorococcus marinus (strain MIT 9515).